We begin with the raw amino-acid sequence, 201 residues long: Probable nicotinate-nucleotide adenylyltransferase (201 aa).

Belongs to the NadD family.

The catalysed reaction is nicotinate beta-D-ribonucleotide + ATP + H(+) = deamido-NAD(+) + diphosphate. The protein operates within cofactor biosynthesis; NAD(+) biosynthesis; deamido-NAD(+) from nicotinate D-ribonucleotide: step 1/1. In terms of biological role, catalyzes the reversible adenylation of nicotinate mononucleotide (NaMN) to nicotinic acid adenine dinucleotide (NaAD). The sequence is that of Probable nicotinate-nucleotide adenylyltransferase from Neisseria meningitidis serogroup C / serotype 2a (strain ATCC 700532 / DSM 15464 / FAM18).